We begin with the raw amino-acid sequence, 692 residues long: Elongation factor G (692 aa).

Residues 8–282 form the tr-type G domain; that stretch reads EKTRNIGIMA…AVIDYLPSPL (275 aa). Residues 17-24, 81-85, and 135-138 contribute to the GTP site; these read AHVDAGKT, DTPGH, and NKMD.

The protein belongs to the TRAFAC class translation factor GTPase superfamily. Classic translation factor GTPase family. EF-G/EF-2 subfamily.

Its subcellular location is the cytoplasm. Functionally, catalyzes the GTP-dependent ribosomal translocation step during translation elongation. During this step, the ribosome changes from the pre-translocational (PRE) to the post-translocational (POST) state as the newly formed A-site-bound peptidyl-tRNA and P-site-bound deacylated tRNA move to the P and E sites, respectively. Catalyzes the coordinated movement of the two tRNA molecules, the mRNA and conformational changes in the ribosome. The sequence is that of Elongation factor G from Streptococcus agalactiae serotype III (strain NEM316).